The primary structure comprises 115 residues: U17-barytoxin-Tl1c (115 aa).

An N-terminal signal peptide occupies residues M1–A20. Residues K21–R74 constitute a propeptide that is removed on maturation. Cystine bridges form between C75–C89, C82–C94, and C88–C109.

Belongs to the neurotoxin 14 (magi-1) family. 03 (ICK-30-40) subfamily. As to expression, expressed by the venom gland.

Its subcellular location is the secreted. Its function is as follows. Ion channel inhibitor. This chain is U17-barytoxin-Tl1c, found in Trittame loki (Brush-footed trapdoor spider).